A 160-amino-acid chain; its full sequence is uncharacterized protein (160 aa).

To A.fulgidus AF1717.

This is an uncharacterized protein from Bacillus subtilis (strain 168).